The following is a 396-amino-acid chain: Phosphoglycerate kinase (396 aa).

Substrate contacts are provided by residues 21 to 23, Arg37, 60 to 63, Arg121, and Arg154; these read DFN and HLGR. ATP contacts are provided by residues Lys205, Gly296, Glu327, and 353–356; that span reads GGDS.

The protein belongs to the phosphoglycerate kinase family. Monomer.

The protein resides in the cytoplasm. It carries out the reaction (2R)-3-phosphoglycerate + ATP = (2R)-3-phospho-glyceroyl phosphate + ADP. It participates in carbohydrate degradation; glycolysis; pyruvate from D-glyceraldehyde 3-phosphate: step 2/5. The protein is Phosphoglycerate kinase of Anaeromyxobacter dehalogenans (strain 2CP-1 / ATCC BAA-258).